The following is a 288-amino-acid chain: NGG1-interacting factor 3 (288 aa).

This sequence belongs to the GTP cyclohydrolase I type 2/NIF3 family. In terms of assembly, may interact with NGG1.

It localises to the mitochondrion. The protein is NGG1-interacting factor 3 of Saccharomyces cerevisiae (strain ATCC 204508 / S288c) (Baker's yeast).